A 95-amino-acid chain; its full sequence is Putative per-hexamer repeat protein 4 (95 aa).

This Mus musculus (Mouse) protein is Putative per-hexamer repeat protein 4 (Phxr4).